Here is a 1155-residue protein sequence, read N- to C-terminus: PAN2-PAN3 deadenylation complex catalytic subunit pan2 (1155 aa).

WD repeat units follow at residues 102-145 and 276-315; these read THED…DKLP and ANVS…HFNE. The tract at residues 316–452 is linker; the sequence is MSKEVEFADV…GTKLNGEAED (137 aa). Residues 453–822 form the USP domain; it reads DPLLKYSNVE…VPCVLAYQVK (370 aa). The 179-residue stretch at 871–1049 folds into the Exonuclease domain; it reads VALDTEFVDL…IEDARMALRL (179 aa). Positions 874, 876, 983, and 1042 each coordinate a divalent metal cation. Residues 1095-1155 are disordered; that stretch reads TAVTMQNNSG…GDFFGGSPLK (61 aa). A compositionally biased stretch (polar residues) spans 1097 to 1106; the sequence is VTMQNNSGRN. The segment covering 1107-1124 has biased composition (low complexity); sequence TPSTPEVTAPTASAPTTP.

This sequence belongs to the peptidase C19 family. PAN2 subfamily. Forms a heterotrimer with an asymmetric homodimer of the regulatory subunit pan3 to form the poly(A)-nuclease (PAN) deadenylation complex. It depends on a divalent metal cation as a cofactor.

The protein localises to the cytoplasm. It carries out the reaction Exonucleolytic cleavage of poly(A) to 5'-AMP.. With respect to regulation, positively regulated by the regulatory subunit pan3. Its function is as follows. Catalytic subunit of the poly(A)-nuclease (PAN) deadenylation complex, one of two cytoplasmic mRNA deadenylases involved in mRNA turnover. PAN specifically shortens poly(A) tails of RNA and the activity is stimulated by poly(A)-binding protein pab1. PAN deadenylation is followed by rapid degradation of the shortened mRNA tails by the CCR4-NOT complex. Deadenylated mRNAs are then degraded by two alternative mechanisms, namely exosome-mediated 3'-5' exonucleolytic degradation, or deadenylation-dependent mRNA decaping and subsequent 5'-3' exonucleolytic degradation by xrn1. May also be involved in post-transcriptional maturation of mRNA poly(A) tails. In Aspergillus oryzae (strain ATCC 42149 / RIB 40) (Yellow koji mold), this protein is PAN2-PAN3 deadenylation complex catalytic subunit pan2.